The sequence spans 590 residues: Arginine--tRNA ligase, cytoplasmic (590 aa).

N-acetylalanine is present on Ala2. L-arginine-binding positions include 137–139 (SPN), His148, Tyr322, Asp326, and Gln350. Positions 138 to 149 (PNIAKEMHVGHL) match the 'HIGH' region motif. Residues 470-484 (DTAVYLLYAHARICS) are interaction with tRNA.

It belongs to the class-I aminoacyl-tRNA synthetase family.

It localises to the cytoplasm. The protein localises to the cytosol. It catalyses the reaction tRNA(Arg) + L-arginine + ATP = L-arginyl-tRNA(Arg) + AMP + diphosphate. Functionally, forms part of a macromolecular complex that catalyzes the attachment of specific amino acids to cognate tRNAs during protein synthesis. In Arabidopsis thaliana (Mouse-ear cress), this protein is Arginine--tRNA ligase, cytoplasmic.